A 347-amino-acid chain; its full sequence is NADH-quinone oxidoreductase subunit H (347 aa).

The next 8 helical transmembrane spans lie at 21 to 41, 87 to 107, 118 to 138, 157 to 177, 195 to 215, 258 to 278, 283 to 303, and 323 to 343; these read VAGI…IIYA, GLFL…WAVI, INVG…GVIL, AQMI…VLFA, GIVN…MFLI, NVLL…LPPI, LYAV…FFVF, and WKIF…YLML.

This sequence belongs to the complex I subunit 1 family. In terms of assembly, NDH-1 is composed of 14 different subunits. Subunits NuoA, H, J, K, L, M, N constitute the membrane sector of the complex.

It localises to the cell inner membrane. The enzyme catalyses a quinone + NADH + 5 H(+)(in) = a quinol + NAD(+) + 4 H(+)(out). NDH-1 shuttles electrons from NADH, via FMN and iron-sulfur (Fe-S) centers, to quinones in the respiratory chain. The immediate electron acceptor for the enzyme in this species is believed to be ubiquinone. Couples the redox reaction to proton translocation (for every two electrons transferred, four hydrogen ions are translocated across the cytoplasmic membrane), and thus conserves the redox energy in a proton gradient. This subunit may bind ubiquinone. This is NADH-quinone oxidoreductase subunit H from Sphingopyxis alaskensis (strain DSM 13593 / LMG 18877 / RB2256) (Sphingomonas alaskensis).